Reading from the N-terminus, the 498-residue chain is Pyruvate kinase (498 aa).

Arginine 53 is a binding site for substrate. Residues asparagine 55, serine 57, aspartate 87, and threonine 88 each coordinate K(+). 55–58 (NFSH) contributes to the ATP binding site. Arginine 94 and lysine 178 together coordinate ATP. Glutamate 240 contacts Mg(2+). The substrate site is built by glycine 263, aspartate 264, and threonine 296. Aspartate 264 is a Mg(2+) binding site.

Belongs to the pyruvate kinase family. Homotetramer. It depends on Mg(2+) as a cofactor. K(+) is required as a cofactor.

The catalysed reaction is pyruvate + ATP = phosphoenolpyruvate + ADP + H(+). The protein operates within carbohydrate degradation; glycolysis; pyruvate from D-glyceraldehyde 3-phosphate: step 5/5. This Trypanoplasma borreli protein is Pyruvate kinase (PYK).